A 123-amino-acid chain; its full sequence is Large ribosomal subunit protein bL12 (123 aa).

The protein belongs to the bacterial ribosomal protein bL12 family. Homodimer. Part of the ribosomal stalk of the 50S ribosomal subunit. Forms a multimeric L10(L12)X complex, where L10 forms an elongated spine to which 2 to 4 L12 dimers bind in a sequential fashion. Binds GTP-bound translation factors.

In terms of biological role, forms part of the ribosomal stalk which helps the ribosome interact with GTP-bound translation factors. Is thus essential for accurate translation. The polypeptide is Large ribosomal subunit protein bL12 (Metamycoplasma arthritidis (strain 158L3-1) (Mycoplasma arthritidis)).